A 320-amino-acid polypeptide reads, in one-letter code: ATP-dependent 6-phosphofructokinase isozyme 1 (320 aa).

Position 12 (Gly12) interacts with ATP. ADP is bound by residues 22–26 and 55–60; these read RGVVR and RYSVSD. ATP-binding positions include 73-74 and 103-106; these read RF and GDGS. Asp104 lines the Mg(2+) pocket. 126 to 128 lines the substrate pocket; that stretch reads TID. Asp128 serves as the catalytic Proton acceptor. Residue Arg155 participates in ADP binding. Substrate contacts are provided by residues Arg163 and 170–172; that span reads MGR. ADP contacts are provided by residues 186-188, Lys212, and 214-216; these read GCE and KKH. Substrate contacts are provided by residues Glu223, Arg244, and 250–253; that span reads HIQR.

It belongs to the phosphofructokinase type A (PFKA) family. ATP-dependent PFK group I subfamily. Prokaryotic clade 'B1' sub-subfamily. As to quaternary structure, homotetramer. Mg(2+) is required as a cofactor.

The protein localises to the cytoplasm. The enzyme catalyses beta-D-fructose 6-phosphate + ATP = beta-D-fructose 1,6-bisphosphate + ADP + H(+). The protein operates within carbohydrate degradation; glycolysis; D-glyceraldehyde 3-phosphate and glycerone phosphate from D-glucose: step 3/4. Its activity is regulated as follows. Allosterically activated by ADP and other diphosphonucleosides, and allosterically inhibited by phosphoenolpyruvate. In terms of biological role, catalyzes the phosphorylation of D-fructose 6-phosphate to fructose 1,6-bisphosphate by ATP, the first committing step of glycolysis. This Escherichia coli O6:H1 (strain CFT073 / ATCC 700928 / UPEC) protein is ATP-dependent 6-phosphofructokinase isozyme 1.